We begin with the raw amino-acid sequence, 422 residues long: Glucosylglycerol-phosphate phosphatase (422 aa).

The Proton donor role is filled by aspartate 403.

It belongs to the histidine acid phosphatase family. In terms of assembly, monomer. Interacts with GGPS.

It catalyses the reaction 2-O-(alpha-D-glucopyranosyl)-sn-glycerol 3-phosphate + H2O = 2-O-(alpha-D-glucopyranosyl)glycerol + phosphate. In terms of biological role, phosphorylates glucosylglycerol-phosphate the precursor of the osmoprotectant glucosylglycerol necessary for salt adaptation of Synechocystis. The chain is Glucosylglycerol-phosphate phosphatase (stpA) from Synechocystis sp. (strain ATCC 27184 / PCC 6803 / Kazusa).